Consider the following 110-residue polypeptide: Small ribosomal subunit protein bS16 (110 aa).

The tract at residues 79 to 110 (AAGVKKREARNNPQKAVPRKERKAQAEAAAKG) is disordered.

Belongs to the bacterial ribosomal protein bS16 family.

This chain is Small ribosomal subunit protein bS16, found in Bradyrhizobium diazoefficiens (strain JCM 10833 / BCRC 13528 / IAM 13628 / NBRC 14792 / USDA 110).